The primary structure comprises 236 residues: MKTIVVCSGGLDSVTLAHKVAAEQQLIGLVSFDYGQRHRKELDFAARCASRLSVPHHIIDIAGIGGHLSGSALTDNVEVPDGHYAEETMKATVVPNRNAIMLAIAFGLAAAQKADAVAVAVHGGDHFIYPDCRPGFIEAFQRMQNEALEGYASVKLLAPYVDVSKAAIVVDGEKHGTPFSETWSCYKGGEPHCGRCGTCVERREAFHLAGVPDPTAYEDQDFWKAAISRYSATEVR.

7–17 provides a ligand contact to ATP; the sequence is CSGGLDSVTLA. Zn(2+)-binding residues include Cys185, Cys193, Cys196, and Cys199.

It belongs to the QueC family. Requires Zn(2+) as cofactor.

It carries out the reaction 7-carboxy-7-deazaguanine + NH4(+) + ATP = 7-cyano-7-deazaguanine + ADP + phosphate + H2O + H(+). It participates in purine metabolism; 7-cyano-7-deazaguanine biosynthesis. Functionally, catalyzes the ATP-dependent conversion of 7-carboxy-7-deazaguanine (CDG) to 7-cyano-7-deazaguanine (preQ(0)). The polypeptide is 7-cyano-7-deazaguanine synthase (Rhizobium johnstonii (strain DSM 114642 / LMG 32736 / 3841) (Rhizobium leguminosarum bv. viciae)).